A 253-amino-acid polypeptide reads, in one-letter code: Chloride intracellular channel protein 4 (253 aa).

Ala2 is modified (N-acetylalanine). The tract at residues 2–101 (ALSMPLNGLK…EEFLEEVLCP (100 aa)) is required for insertion into the membrane. Phosphoserine is present on Ser4. Lys24 carries the post-translational modification N6-acetyllysine. The G-site motif lies at 35–38 (CPFS). Residues 37 to 57 (FSQRLFMILWLKGVVFSVTTV) traverse the membrane as a helical segment. The 164-residue stretch at 81-244 (NSEVKTDVNK…PSDKEVEIAY (164 aa)) folds into the GST C-terminal domain. An N6-acetyllysine modification is found at Lys130. Phosphoserine occurs at positions 132, 167, and 236. A Phosphotyrosine modification is found at Tyr244.

Belongs to the chloride channel CLIC family. In terms of assembly, monomer. Interacts with HRH3. Detected in brain, in cell bodies and dendrites of Purkinje cells in cerebellar neurons (at protein level). Expressed neonatal and adult cardiomyocytes (at protein level). Marked expression was found in hippocampus and cerebellum, and in many other tissues.

The protein localises to the cytoplasm. Its subcellular location is the cytoskeleton. It is found in the microtubule organizing center. The protein resides in the centrosome. It localises to the cytoplasmic vesicle membrane. The protein localises to the nucleus. Its subcellular location is the cell membrane. It is found in the mitochondrion. The protein resides in the cell junction. It localises to the endoplasmic reticulum membrane. The enzyme catalyses chloride(in) = chloride(out). The catalysed reaction is thiocyanate(in) = thiocyanate(out). It catalyses the reaction nitrate(in) = nitrate(out). It carries out the reaction iodide(out) = iodide(in). The enzyme catalyses bromide(in) = bromide(out). The catalysed reaction is fluoride(in) = fluoride(out). It catalyses the reaction choline(out) = choline(in). Its activity is regulated as follows. Channel activity is redox- and pH-regulated. Anion vs cation selectivity is enhanced when fully oxidized. Functionally, in the soluble state, catalyzes glutaredoxin-like thiol disulfide exchange reactions with reduced glutathione as electron donor. Can insert into membranes and form voltage-dependent multi-ion conductive channels. Membrane insertion seems to be redox-regulated and may occur only under oxidizing conditions. Has alternate cellular functions like a potential role in angiogenesis or in maintaining apical-basolateral membrane polarity during mitosis and cytokinesis. Could also promote endothelial cell proliferation and regulate endothelial morphogenesis (tubulogenesis). Promotes cell-surface expression of HRH3. This Rattus norvegicus (Rat) protein is Chloride intracellular channel protein 4 (Clic4).